The following is a 323-amino-acid chain: Vertebrate ancient opsin (323 aa).

Over 1 to 38 the chain is Extracellular; it reads MDTLRIAVNGVSYNEASEIYKPHADPFTGPITNLAPWN. The chain crosses the membrane as a helical span at residues 39-63; sequence FAVLATLMFVITSLSLFENFTVMLA. Residues 64–75 are Cytoplasmic-facing; the sequence is TYKFKQLRQPLN. A helical transmembrane segment spans residues 76–100; it reads YIIVNLSLADFLVSLTGGTISFLTN. Over 101–115 the chain is Extracellular; that stretch reads ARGYFFLGNWACVLE. The cysteines at positions 112 and 189 are disulfide-linked. Residues 116-135 traverse the membrane as a helical segment; that stretch reads GFAVTYFGIVAMWSLAVLSF. Over 136–154 the chain is Cytoplasmic; it reads ERYFVICRPLGNVRLRGKH. The helical transmembrane segment at 155–178 threads the bilayer; the sequence is AALGLLFVWTFSFIWTIPPVFGWC. At 179–202 the chain is on the extracellular side; the sequence is SYTVSKIGTTCEPNWYSNNIWNHT. N-linked (GlcNAc...) asparagine glycosylation occurs at asparagine 200. Residues 203-230 traverse the membrane as a helical segment; it reads YIITFFVTCFIMPLGMIIYCYGKLLQKL. Residues 231 to 250 are Cytoplasmic-facing; sequence RKVSHDRLGNAKKPERQVSR. A helical transmembrane segment spans residues 251 to 274; the sequence is MVVVMIVAYLVGWTPYAAFSIIVT. At 275–282 the chain is on the extracellular side; sequence ACPTIYLD. The chain crosses the membrane as a helical span at residues 283–307; it reads PRLAAAPAFFSKTAAVYNPVIYVFM. Residue lysine 294 is modified to N6-(retinylidene)lysine. The Cytoplasmic portion of the chain corresponds to 308-323; that stretch reads NKQVSTQLNWGFWSRA.

The protein belongs to the G-protein coupled receptor 1 family. Opsin subfamily. Post-translationally, phosphorylated on some or all of the serine and threonine residues present in the C-terminal region.

The protein localises to the membrane. In Salmo salar (Atlantic salmon), this protein is Vertebrate ancient opsin.